We begin with the raw amino-acid sequence, 138 residues long: Cysteine desulfuration protein SufE (138 aa).

The active-site Cysteine persulfide intermediate is Cys-51.

This sequence belongs to the SufE family. As to quaternary structure, homodimer. Interacts with SufS.

The protein resides in the cytoplasm. It participates in cofactor biosynthesis; iron-sulfur cluster biosynthesis. Its function is as follows. Participates in cysteine desulfuration mediated by SufS. Cysteine desulfuration mobilizes sulfur from L-cysteine to yield L-alanine and constitutes an essential step in sulfur metabolism for biosynthesis of a variety of sulfur-containing biomolecules. Functions as a sulfur acceptor for SufS, by mediating the direct transfer of the sulfur atom from the S-sulfanylcysteine of SufS, an intermediate product of cysteine desulfuration process. The chain is Cysteine desulfuration protein SufE from Shigella boydii serotype 18 (strain CDC 3083-94 / BS512).